A 152-amino-acid chain; its full sequence is Protein NrdI (152 aa).

This sequence belongs to the NrdI family.

Functionally, probably involved in ribonucleotide reductase function. In Mycobacterium sp. (strain JLS), this protein is Protein NrdI.